A 140-amino-acid polypeptide reads, in one-letter code: NTF2-related export protein 1 (140 aa).

N-acetylalanine is present on A2. In terms of domain architecture, NTF2 spans 16–135 (AAEEFVNVYY…WKIASDCFRF (120 aa)).

Heterodimer with NXF1. Forms a complex with RANGAP1, RANBP2/NUP358 and NXF1. Interacts (via NTF2 domain) with NXF1. Stabilizes the NTF2 domain of NXF1 by heterodimerization. The formation of NXF1-NXT1 heterodimers is required for the NXF1-mediated nuclear mRNA export. Preferentially binds Ran-GTP. Associates with NXF2, NXF3 and NXF5. Does not bind nucleoporins (NPC) directly, its association to NPC is mediated by NXF1.

The protein resides in the nucleus. It localises to the nucleus speckle. The protein localises to the cytoplasm. In terms of biological role, stimulator of protein export for NES-containing proteins. Also plays a role in the nuclear export of U1 snRNA, tRNA, and mRNA. The NXF1-NXT1 heterodimer is involved in the export of HSP70 mRNA in conjunction with ALYREF/THOC4 and THOC5. The polypeptide is NTF2-related export protein 1 (NXT1) (Bos taurus (Bovine)).